Here is a 360-residue protein sequence, read N- to C-terminus: Peptide chain release factor 1 (360 aa).

N5-methylglutamine is present on Gln-235. The disordered stretch occupies residues 285 to 313 (KRQQAEASTRRNLLGSGDRSDRNRTYNFP).

Belongs to the prokaryotic/mitochondrial release factor family. Methylated by PrmC. Methylation increases the termination efficiency of RF1.

It localises to the cytoplasm. Peptide chain release factor 1 directs the termination of translation in response to the peptide chain termination codons UAG and UAA. This chain is Peptide chain release factor 1, found in Shigella boydii serotype 18 (strain CDC 3083-94 / BS512).